The following is a 326-amino-acid chain: MSNGYEDHMDDVCRDDIGRTNLIVNYLPQNMTQDELRSLFSSIGEVESAKLIRDKVAGHSLGYGFVNYLNAKDAERAINTLNGLRLQSKTIKVSFARPSSETIKDANLYISGLPRTMTQKDVEDMFLPFGHIINSRVLVDQATGLSRGVAFIRFDKRSEAEEAIASFNGHKPPGSSEPITVKFAANPNQSKNMALLSQICHSPARRFGGPVHHQAQRFRFSPMGVDHMSSISSVNVASSASSGWCIFIYNLGQDADEGILWQMFGPFGAVTNVKVIRDFNTNKCKGFGFVTMTNYEEAAMAIASLNGYRLGDKTLQVSFKTSKSHK.

RRM domains lie at 20–98, 106–186, and 244–322; these read TNLI…FARP, ANLY…FAAN, and WCIF…FKTS.

It belongs to the RRM elav family. Interacts (via RRM3) with cirbp. Unable to form oligomers. Part of a ribonucleoprotein (RNP) complex, at least composed of elavl1/elrA and/or elavl2/elrB, igf2bp3/vg1RBP, ddx6/Xp54, ybx2/frgy2, lsm14b/rap55b and, in a subset of RNP complexes, stau1/staufen.

The protein localises to the cytoplasm. It localises to the cell cortex. Its function is as follows. RNA-binding protein that binds to the 3'-UTR region of mRNAs and increases their stability. Involved in embryonic stem cells (ESCs) differentiation: preferentially binds mRNAs that are not methylated by N6-methyladenosine (m6A), stabilizing them, promoting ESCs differentiation. Binds to poly-U elements and AU-rich elements (AREs) in the 3'-UTR of target mRNAs. Acts cooperatively with cribp to stabilize AU-rich sequence (ARE)-containing mRNAs. May play a role during gastrulation. Required for the vegetal localization of vg1 mRNA. In Xenopus laevis (African clawed frog), this protein is ELAV-like protein 1-B (elavl1-b).